Reading from the N-terminus, the 218-residue chain is Small ribosomal subunit protein uS3 (218 aa).

In terms of domain architecture, KH type-2 spans 39 to 107; sequence IRDYIKSKLL…QISINIVEIK (69 aa).

Belongs to the universal ribosomal protein uS3 family. In terms of assembly, part of the 30S ribosomal subunit. Forms a tight complex with proteins S10 and S14.

Binds the lower part of the 30S subunit head. Binds mRNA in the 70S ribosome, positioning it for translation. In Desulforudis audaxviator (strain MP104C), this protein is Small ribosomal subunit protein uS3.